Consider the following 634-residue polypeptide: Heat shock 70-related protein 1, mitochondrial (634 aa).

The transit peptide at 1-20 (MFARRVCGSAAASAACLARH) directs the protein to the mitochondrion. The stretch at 538 to 614 (SEQHAEADRV…AAATDKLQKA (77 aa)) forms a coiled coil.

The protein belongs to the heat shock protein 70 family.

Its subcellular location is the mitochondrion. This chain is Heat shock 70-related protein 1, mitochondrial (HSP70.1), found in Leishmania major.